The chain runs to 247 residues: Probable transcriptional regulatory protein PBPRA1113 (247 aa).

The protein belongs to the TACO1 family.

It is found in the cytoplasm. The protein is Probable transcriptional regulatory protein PBPRA1113 of Photobacterium profundum (strain SS9).